A 151-amino-acid chain; its full sequence is Pollen allergen Sal k 5.0101 (151 aa).

Intrachain disulfides connect C17/C88, C20/C132, and C41/C76. N43 is a glycosylation site (N-linked (GlcNAc...) asparagine).

This sequence belongs to the Ole e I family. N-glycosylated. Contains fucose monosaccharides in the glycan structure. As to expression, expressed in pollen (at protein level).

It is found in the secreted. This chain is Pollen allergen Sal k 5.0101, found in Kali turgidum (Prickly saltwort).